The chain runs to 256 residues: Geranylgeranylglyceryl phosphate synthase (256 aa).

The Mg(2+) site is built by D28 and S53. Sn-glycerol 1-phosphate contacts are provided by residues 172–178, 203–204, and 225–226; these read YLEAGSG, GG, and GT.

The protein belongs to the GGGP/HepGP synthase family. Group II subfamily. The cofactor is Mg(2+).

Its subcellular location is the cytoplasm. The enzyme catalyses sn-glycerol 1-phosphate + (2E,6E,10E)-geranylgeranyl diphosphate = sn-3-O-(geranylgeranyl)glycerol 1-phosphate + diphosphate. The protein operates within membrane lipid metabolism; glycerophospholipid metabolism. In terms of biological role, prenyltransferase that catalyzes the transfer of the geranylgeranyl moiety of geranylgeranyl diphosphate (GGPP) to the C3 hydroxyl of sn-glycerol-1-phosphate (G1P). This reaction is the first ether-bond-formation step in the biosynthesis of archaeal membrane lipids. The chain is Geranylgeranylglyceryl phosphate synthase from Methanococcus maripaludis (strain C5 / ATCC BAA-1333).